The chain runs to 185 residues: Elongation factor P (185 aa).

It belongs to the elongation factor P family.

The protein resides in the cytoplasm. Its pathway is protein biosynthesis; polypeptide chain elongation. Involved in peptide bond synthesis. Stimulates efficient translation and peptide-bond synthesis on native or reconstituted 70S ribosomes in vitro. Probably functions indirectly by altering the affinity of the ribosome for aminoacyl-tRNA, thus increasing their reactivity as acceptors for peptidyl transferase. This Bacillus cereus (strain ATCC 10987 / NRS 248) protein is Elongation factor P.